Reading from the N-terminus, the 207-residue chain is uncharacterized protein (207 aa).

An N-terminal signal peptide occupies residues methionine 1–serine 19.

It to P.aeruginosa PA4490 and T.maritima TM0986.

This is an uncharacterized protein from Escherichia coli (strain K12).